A 663-amino-acid polypeptide reads, in one-letter code: Beta-galactosidase YesZ (663 aa).

Substrate is bound at residue R106. Residue C110 participates in Zn(2+) binding. N144 is a substrate binding site. The Proton donor role is filled by E145. Residues C153, C155, and C158 each coordinate Zn(2+). The active-site Nucleophile is E296. 345 to 348 (EISH) lines the substrate pocket.

Belongs to the glycosyl hydrolase 42 family. Homotrimer.

The enzyme catalyses Hydrolysis of terminal non-reducing beta-D-galactose residues in beta-D-galactosides.. Its function is as follows. May play a role in the degradation of rhamnogalacturonan derived from plant cell walls. This is Beta-galactosidase YesZ (yesZ) from Bacillus subtilis (strain 168).